The sequence spans 591 residues: Aspartate--tRNA(Asp/Asn) ligase (591 aa).

L-aspartate is bound at residue glutamate 174. The interval 198-201 is aspartate; it reads QLFK. Arginine 220 is a binding site for L-aspartate. ATP is bound by residues 220–222 and glutamine 229; that span reads RDE. Histidine 450 contributes to the L-aspartate binding site. Glutamate 483 provides a ligand contact to ATP. Arginine 490 is a binding site for L-aspartate. Residue 535–538 coordinates ATP; the sequence is GLDR.

The protein belongs to the class-II aminoacyl-tRNA synthetase family. Type 1 subfamily. As to quaternary structure, homodimer.

Its subcellular location is the cytoplasm. The catalysed reaction is tRNA(Asx) + L-aspartate + ATP = L-aspartyl-tRNA(Asx) + AMP + diphosphate. Aspartyl-tRNA synthetase with relaxed tRNA specificity since it is able to aspartylate not only its cognate tRNA(Asp) but also tRNA(Asn). Reaction proceeds in two steps: L-aspartate is first activated by ATP to form Asp-AMP and then transferred to the acceptor end of tRNA(Asp/Asn). The chain is Aspartate--tRNA(Asp/Asn) ligase from Pseudomonas syringae pv. syringae (strain B728a).